Reading from the N-terminus, the 93-residue chain is Large ribosomal subunit protein uL23cz/uL23cy (93 aa).

This sequence belongs to the universal ribosomal protein uL23 family. As to quaternary structure, part of the 50S ribosomal subunit.

It is found in the plastid. The protein resides in the chloroplast. In terms of biological role, binds to 23S rRNA. This Eucalyptus globulus subsp. globulus (Tasmanian blue gum) protein is Large ribosomal subunit protein uL23cz/uL23cy (rpl23-A).